A 365-amino-acid chain; its full sequence is Phosphate acyltransferase (365 aa).

This sequence belongs to the PlsX family. As to quaternary structure, homodimer. Probably interacts with PlsY.

Its subcellular location is the cytoplasm. It catalyses the reaction a fatty acyl-[ACP] + phosphate = an acyl phosphate + holo-[ACP]. Its pathway is lipid metabolism; phospholipid metabolism. In terms of biological role, catalyzes the reversible formation of acyl-phosphate (acyl-PO(4)) from acyl-[acyl-carrier-protein] (acyl-ACP). This enzyme utilizes acyl-ACP as fatty acyl donor, but not acyl-CoA. In Klebsiella pneumoniae subsp. pneumoniae (strain ATCC 700721 / MGH 78578), this protein is Phosphate acyltransferase.